A 238-amino-acid polypeptide reads, in one-letter code: Orotidine 5'-phosphate decarboxylase (238 aa).

Residues D10, K32, 59 to 68, T122, R184, Q193, G213, and R214 contribute to the substrate site; that span reads DLKLHDIPNT. K61 acts as the Proton donor in catalysis.

This sequence belongs to the OMP decarboxylase family. Type 1 subfamily. As to quaternary structure, homodimer.

The enzyme catalyses orotidine 5'-phosphate + H(+) = UMP + CO2. The protein operates within pyrimidine metabolism; UMP biosynthesis via de novo pathway; UMP from orotate: step 2/2. Its function is as follows. Catalyzes the decarboxylation of orotidine 5'-monophosphate (OMP) to uridine 5'-monophosphate (UMP). The polypeptide is Orotidine 5'-phosphate decarboxylase (Bacillus thuringiensis subsp. konkukian (strain 97-27)).